The following is a 196-amino-acid chain: Peptidyl-tRNA hydrolase (196 aa).

Position 15 (histidine 15) interacts with tRNA. Histidine 20 (proton acceptor) is an active-site residue. Positions 66, 68, and 114 each coordinate tRNA.

It belongs to the PTH family. As to quaternary structure, monomer.

It is found in the cytoplasm. It catalyses the reaction an N-acyl-L-alpha-aminoacyl-tRNA + H2O = an N-acyl-L-amino acid + a tRNA + H(+). Functionally, hydrolyzes ribosome-free peptidyl-tRNAs (with 1 or more amino acids incorporated), which drop off the ribosome during protein synthesis, or as a result of ribosome stalling. In terms of biological role, catalyzes the release of premature peptidyl moieties from peptidyl-tRNA molecules trapped in stalled 50S ribosomal subunits, and thus maintains levels of free tRNAs and 50S ribosomes. This Polynucleobacter necessarius subsp. necessarius (strain STIR1) protein is Peptidyl-tRNA hydrolase.